A 111-amino-acid chain; its full sequence is N-alpha-acetyltransferase 38-B, NatC auxiliary subunit (111 aa).

In terms of domain architecture, Sm spans 28–106; it reads TARHKLESLL…IVSIQVELET (79 aa).

The protein belongs to the snRNP Sm proteins family. As to quaternary structure, component of the N-terminal acetyltransferase C (NatC) complex, which is composed of naa35, naa38 and naa30.

It localises to the cytoplasm. Functionally, auxillary component of the N-terminal acetyltransferase C (NatC) complex which catalyzes acetylation of N-terminal methionine residues. The chain is N-alpha-acetyltransferase 38-B, NatC auxiliary subunit (naa38-b) from Xenopus laevis (African clawed frog).